The sequence spans 921 residues: Protein translocase subunit SecA (921 aa).

ATP contacts are provided by residues glutamine 87, 105 to 109 (GEGKT), and aspartate 515. Positions 575-594 (RRIDNQLRGRSGRQGDPGSS) are disordered. Zn(2+)-binding residues include cysteine 905, cysteine 907, cysteine 916, and cysteine 917.

It belongs to the SecA family. As to quaternary structure, monomer and homodimer. Part of the essential Sec protein translocation apparatus which comprises SecA, SecYEG and auxiliary proteins SecDF-YajC and YidC. Zn(2+) serves as cofactor.

The protein resides in the cell inner membrane. The protein localises to the cytoplasm. It carries out the reaction ATP + H2O + cellular proteinSide 1 = ADP + phosphate + cellular proteinSide 2.. Functionally, part of the Sec protein translocase complex. Interacts with the SecYEG preprotein conducting channel. Has a central role in coupling the hydrolysis of ATP to the transfer of proteins into and across the cell membrane, serving both as a receptor for the preprotein-SecB complex and as an ATP-driven molecular motor driving the stepwise translocation of polypeptide chains across the membrane. The chain is Protein translocase subunit SecA from Polynucleobacter necessarius subsp. necessarius (strain STIR1).